Consider the following 169-residue polypeptide: Gametocyte-specific factor 1-like (169 aa).

2 consecutive CHHC U11-48K-type zinc fingers follow at residues 6-33 and 40-67; these read LETCPYNPHHRIPLSRFQYHLASCRRKN and MASCKYNACHVVPIKKLEEHEAACVNKS. Positions 9, 15, 25, 29, 43, 49, 59, and 63 each coordinate Zn(2+). Disordered regions lie at residues 67–103 and 131–169; these read STMEEEDSLSPLKVSLPNAGQKGNRNASPVSPRLPNP and SDTRESETDDHNPIPDCPRRRSSDRESEPPAEDTSLLKA. The span at 131–158 shows a compositional bias: basic and acidic residues; that stretch reads SDTRESETDDHNPIPDCPRRRSSDRESE.

Belongs to the UPF0224 (FAM112) family.

The protein is Gametocyte-specific factor 1-like (GTSF1L) of Bos taurus (Bovine).